Here is a 1553-residue protein sequence, read N- to C-terminus: Mediator of RNA polymerase II transcription subunit 14 (1553 aa).

2 consecutive short sequence motifs (LXXLL motif) follow at residues 55-59 and 472-476; these read LAELL and LPALL. Position 615 is a phosphoserine (S615). 3 disordered regions span residues 699 to 723, 1006 to 1199, and 1513 to 1553; these read FATQQQQQQGAPAVAGENKPSGTSG, ASHE…LNRP, and GVGS…GGPQ. A Phosphoserine modification is found at S1015. Composition is skewed to low complexity over residues 1024-1039 and 1065-1080; these read GGPSSVAGVSAGGSSP and PSSSNPHTPASPHPSA. The segment covering 1081 to 1090 has biased composition (gly residues); it reads GAGGGSGPQG. The span at 1099 to 1108 shows a compositional bias: pro residues; sequence PPAPHMPHPS. Residues 1131–1155 are compositionally biased toward polar residues; the sequence is GPNTLYMQSHQDSPFTAMSPANNNW. Pro residues predominate over residues 1159 to 1169; it reads PSMPRPSPRPG. The segment covering 1177–1193 has biased composition (gly residues); it reads TGGGAGVAGGTDRGGSR. Residues 1515 to 1534 show a composition bias toward low complexity; that stretch reads GSSPNPMMPMQQLPQQVGPQ.

Belongs to the Mediator complex subunit 14 family. In terms of assembly, component of the Mediator complex, which may include CDK8, MED4, MED6, MED11, MED14, MED17, MED18, MED20, MED21, MED22, MED27, MED28, MED30 and MED31.

The protein resides in the nucleus. Functionally, component of the Mediator complex, a coactivator involved in the regulated transcription of nearly all RNA polymerase II-dependent genes. Mediator functions as a bridge to convey information from gene-specific regulatory proteins to the basal RNA polymerase II transcription machinery. Mediator is recruited to promoters by direct interactions with regulatory proteins and serves as a scaffold for the assembly of a functional pre-initiation complex with RNA polymerase II and the general transcription factors. Required for activated transcription of the MtnA, MtnB and MtnD genes. The sequence is that of Mediator of RNA polymerase II transcription subunit 14 (MED14) from Drosophila melanogaster (Fruit fly).